A 432-amino-acid chain; its full sequence is MQKRALTINSRGLNGELAVPGDKSISHRALMIGALSEGTTVIDHFLVGEDCLSTLRALQDLGVEIERKGEHVEVIGRGIAGLVEPAAPLQMNNSGTSTRLLMGILAGQSFTSQLVGDASLSRRPMKRVQGPLARLGAQIGLSEAGTLPATVVGHPLQGARVKLEVASAQIKSAVILAALQAQGSTTVSEPLPTRDHTERLLKAFGANLTVDRAANSITVTPGARLVGQEVLVPGDPSSAAFFLVAGAVIANSHLTVKDVCLNPTRTGLIRVLKKMGARLSIKETASGGEPLGDVTIQTSQLRAVTVTAKDVPDLIDELPLVALLAACADGVSEISGAGELRVKETDRIQTVAELFLQLGVDVEERPDGWRIVGRPNWQVQKPNLNSHGDHRLGMLAAVAALRSTTPLFLIDPDAVAVSYPSFFADLAKLGGA.

3 residues coordinate 3-phosphoshikimate: Lys23, Ser24, and Arg28. Residue Lys23 participates in phosphoenolpyruvate binding. Residues Gly95 and Arg123 each coordinate phosphoenolpyruvate. Residues Ser167, Gln169, Asp316, and Lys343 each contribute to the 3-phosphoshikimate site. Gln169 contacts phosphoenolpyruvate. Asp316 (proton acceptor) is an active-site residue. Arg347 and Arg391 together coordinate phosphoenolpyruvate.

Belongs to the EPSP synthase family. In terms of assembly, monomer.

The protein resides in the cytoplasm. The catalysed reaction is 3-phosphoshikimate + phosphoenolpyruvate = 5-O-(1-carboxyvinyl)-3-phosphoshikimate + phosphate. Its pathway is metabolic intermediate biosynthesis; chorismate biosynthesis; chorismate from D-erythrose 4-phosphate and phosphoenolpyruvate: step 6/7. Functionally, catalyzes the transfer of the enolpyruvyl moiety of phosphoenolpyruvate (PEP) to the 5-hydroxyl of shikimate-3-phosphate (S3P) to produce enolpyruvyl shikimate-3-phosphate and inorganic phosphate. This is 3-phosphoshikimate 1-carboxyvinyltransferase from Limosilactobacillus fermentum (strain NBRC 3956 / LMG 18251) (Lactobacillus fermentum).